Here is a 509-residue protein sequence, read N- to C-terminus: ATP synthase subunit alpha (509 aa).

169-176 (GDRQTGKT) lines the ATP pocket.

The protein belongs to the ATPase alpha/beta chains family. In terms of assembly, F-type ATPases have 2 components, CF(1) - the catalytic core - and CF(0) - the membrane proton channel. CF(1) has five subunits: alpha(3), beta(3), gamma(1), delta(1), epsilon(1). CF(0) has three main subunits: a(1), b(2) and c(9-12). The alpha and beta chains form an alternating ring which encloses part of the gamma chain. CF(1) is attached to CF(0) by a central stalk formed by the gamma and epsilon chains, while a peripheral stalk is formed by the delta and b chains.

The protein localises to the cell inner membrane. It catalyses the reaction ATP + H2O + 4 H(+)(in) = ADP + phosphate + 5 H(+)(out). Its function is as follows. Produces ATP from ADP in the presence of a proton gradient across the membrane. The alpha chain is a regulatory subunit. This Rhizobium johnstonii (strain DSM 114642 / LMG 32736 / 3841) (Rhizobium leguminosarum bv. viciae) protein is ATP synthase subunit alpha.